The following is a 309-amino-acid chain: Dehydrogenase/reductase SDR family member 7B (309 aa).

Topologically, residues 1 to 5 are cytoplasmic; it reads MERAL. A helical; Signal-anchor for type II membrane protein transmembrane segment spans residues 6–26; it reads GVGIGPLAAGTVGLLILLKVI. The Lumenal segment spans residues 27-271; it reads QRLRRRPNIQ…LKAVCQKKKD (245 aa). 2 residues coordinate NAD(+): Ser47 and Leu49. Residue Ser179 participates in substrate binding. The NAD(+) site is built by Tyr192, Lys196, and Thr227. Residue Tyr192 is the Proton acceptor of the active site.

This sequence belongs to the short-chain dehydrogenases/reductases (SDR) family.

The protein resides in the endoplasmic reticulum membrane. Functionally, putative oxidoreductase. The chain is Dehydrogenase/reductase SDR family member 7B (dhrs7b) from Danio rerio (Zebrafish).